Reading from the N-terminus, the 107-residue chain is Large ribosomal subunit protein uL24 (107 aa).

It belongs to the universal ribosomal protein uL24 family. Part of the 50S ribosomal subunit.

In terms of biological role, one of two assembly initiator proteins, it binds directly to the 5'-end of the 23S rRNA, where it nucleates assembly of the 50S subunit. One of the proteins that surrounds the polypeptide exit tunnel on the outside of the subunit. The protein is Large ribosomal subunit protein uL24 of Mycobacterium ulcerans (strain Agy99).